Reading from the N-terminus, the 193-residue chain is N-(5'-phosphoribosyl)anthranilate isomerase (193 aa).

The protein belongs to the TrpF family.

It carries out the reaction N-(5-phospho-beta-D-ribosyl)anthranilate = 1-(2-carboxyphenylamino)-1-deoxy-D-ribulose 5-phosphate. Its pathway is amino-acid biosynthesis; L-tryptophan biosynthesis; L-tryptophan from chorismate: step 3/5. The polypeptide is N-(5'-phosphoribosyl)anthranilate isomerase (Streptococcus mutans serotype c (strain ATCC 700610 / UA159)).